We begin with the raw amino-acid sequence, 404 residues long: Protein ARK2N (404 aa).

2 stretches are compositionally biased toward basic and acidic residues: residues 1 to 12 (MKMEEAVGKVEE) and 23 to 32 (SEQETAKEED). 2 disordered regions span residues 1 to 50 (MKME…ADST) and 63 to 255 (RRDS…TNSD). S66 bears the Phosphoserine mark. S67 is subject to Phosphoserine; by AMPK. Residues 87-121 (SDSSNHCMLSPSSSGHLADSDTLSSAEENEPSQAE) show a composition bias toward polar residues. Residues S143, S145, and S147 each carry the phosphoserine modification. Over residues 169-187 (AKVKGHRSQKHKERIRLLR) the composition is skewed to basic residues. The stretch at 175-200 (RSQKHKERIRLLRQKREAAARKKYNL) forms a coiled coil. Residues 202-226 (QDSSTSDSDLTCDSSTSSSDDDEEV) are required for interaction with CSNK2B. The span at 203-219 (DSSTSDSDLTCDSSTSS) shows a compositional bias: low complexity. A phosphoserine mark is found at S327, S328, and S330. At R347 the chain carries Omega-N-methylarginine. A Glycyl lysine isopeptide (Lys-Gly) (interchain with G-Cter in SUMO2) cross-link involves residue K358.

As to quaternary structure, interacts with CSNK2B (via KSSR). Interacts with JUN; the interaction is mediated by CSNK2B. Post-translationally, phosphorylated at Ser-67 by AMPK. In skeletal muscle, phosphorylation is induced by exercise and seems to increase muscle contractile function. Expressed in skeletal muscle.

It localises to the nucleus. In terms of biological role, AMPK substrate important for exercise capacity and skeletal muscle function. Required for normal contraction-induced signaling. Its function is as follows. (Microbial infection) Upon Epstein-Barr virus (EBV) infection, suppresses viral BZLF1 expression and subsequent EBV reactivation by interacting with JUN and inhibiting its transcriptional activator activity on BZLF1 Z promoter. This is Protein ARK2N from Homo sapiens (Human).